The chain runs to 739 residues: NAD(P)H-quinone oxidoreductase subunit 5, chloroplastic (739 aa).

Transmembrane regions (helical) follow at residues 9 to 29 (WIIPFIPLPIPILIGVGLLLF), 40 to 60 (WSFQSVLLLTIVMIFSINLSI), 89 to 109 (IDPLTSIMSILITTVGIMVLI), 125 to 145 (FAYMGFFSTSMLGLVTSSNLI), 147 to 167 (IYIFWELVGMCSYLLIGFWFT), 184 to 204 (IGDFGLLLGILGFYWITGSFE), 224 to 244 (LFVTLCAGLVFAGAVAKSAQF), 258 to 278 (TPISALIHAATMVAAGIFLVA), 289 to 311 (YIMNFISLIGIITVLLGATLALA), 318 to 338 (GLAFSTMSQLGYMMLALGMGS), 354 to 374 (ALLFLGSGSVIHSMETIVGYS), 396 to 416 (NTFLLGTLSLCGIPPLACFWS), 427 to 447 (YSTIFAIIAWATAGLTAFYIF), 546 to 566 (LFPLLILGLFTLFVGSIGIPF), 605 to 625 (VSSVSIAYLGIFIASLLYKPP), and 718 to 738 (ISSYLFFYLTYVSIFLLVFFI).

The protein belongs to the complex I subunit 5 family. In terms of assembly, NDH is composed of at least 16 different subunits, 5 of which are encoded in the nucleus.

The protein localises to the plastid. It localises to the chloroplast thylakoid membrane. It carries out the reaction a plastoquinone + NADH + (n+1) H(+)(in) = a plastoquinol + NAD(+) + n H(+)(out). The catalysed reaction is a plastoquinone + NADPH + (n+1) H(+)(in) = a plastoquinol + NADP(+) + n H(+)(out). Its function is as follows. NDH shuttles electrons from NAD(P)H:plastoquinone, via FMN and iron-sulfur (Fe-S) centers, to quinones in the photosynthetic chain and possibly in a chloroplast respiratory chain. The immediate electron acceptor for the enzyme in this species is believed to be plastoquinone. Couples the redox reaction to proton translocation, and thus conserves the redox energy in a proton gradient. The chain is NAD(P)H-quinone oxidoreductase subunit 5, chloroplastic (ndhF) from Coffea arabica (Arabian coffee).